The following is a 192-amino-acid chain: Xanthine phosphoribosyltransferase (192 aa).

Xanthine-binding residues include Leu20 and Thr26. Residue 127–131 coordinates 5-phospho-alpha-D-ribose 1-diphosphate; the sequence is ANGQA. Residue Lys155 participates in xanthine binding.

It belongs to the purine/pyrimidine phosphoribosyltransferase family. Xpt subfamily. Homodimer.

The protein localises to the cytoplasm. It catalyses the reaction XMP + diphosphate = xanthine + 5-phospho-alpha-D-ribose 1-diphosphate. Its pathway is purine metabolism; XMP biosynthesis via salvage pathway; XMP from xanthine: step 1/1. Functionally, converts the preformed base xanthine, a product of nucleic acid breakdown, to xanthosine 5'-monophosphate (XMP), so it can be reused for RNA or DNA synthesis. In Streptococcus thermophilus, this protein is Xanthine phosphoribosyltransferase.